The following is a 171-amino-acid chain: Ribosome maturation factor RimM (171 aa).

In terms of domain architecture, PRC barrel spans 96–170 (AEGEYYYHEI…LVTIHVMEGL (75 aa)).

This sequence belongs to the RimM family. In terms of assembly, binds ribosomal protein uS19.

It is found in the cytoplasm. Functionally, an accessory protein needed during the final step in the assembly of 30S ribosomal subunit, possibly for assembly of the head region. Essential for efficient processing of 16S rRNA. May be needed both before and after RbfA during the maturation of 16S rRNA. It has affinity for free ribosomal 30S subunits but not for 70S ribosomes. This is Ribosome maturation factor RimM from Bacillus mycoides (strain KBAB4) (Bacillus weihenstephanensis).